The chain runs to 650 residues: GATA zinc finger domain-containing protein 11 (650 aa).

The segment covering 16-79 (LYNNTNTNSN…NSSNSLSSSF (64 aa)) has biased composition (low complexity). Disordered regions lie at residues 16-96 (LYNN…SGYN), 111-181 (KRSN…TTPL), 221-335 (NNSN…NNNK), and 409-515 (RIFG…NKRK). Polar residues predominate over residues 116–129 (LDDNMSVPTLQNFT). 2 stretches are compositionally biased toward low complexity: residues 130–180 (NNNN…PTTP) and 221–260 (NNSNGINNNNHNNNHNNSNNNNNNNSNSNSNNHNNHNNNN). Positions 261–272 (QSIVPQSIHLQS) are enriched in polar residues. The segment covering 273–334 (TTPQIQPLSL…NNSYNTNNNN (62 aa)) has biased composition (low complexity). Positions 425–434 (RPRRFRKSKV) are enriched in basic residues. Residues 442–511 (HNNNNNNINN…GNGNTNSTNN (70 aa)) show a composition bias toward low complexity. A GATA-type zinc finger spans residues 522 to 547 (CTSCGTTSSPEWRKGPAGNQSLCNAC). The disordered stretch occupies residues 619–650 (QQQQQQQQQQQNHHHQQLQQQQQQQQQQQLHH).

In terms of biological role, transcription factor that regulates morphogenetic cell movement during development. The polypeptide is GATA zinc finger domain-containing protein 11 (gtaK) (Dictyostelium discoideum (Social amoeba)).